A 303-amino-acid chain; its full sequence is tRNA dimethylallyltransferase (303 aa).

12 to 19 contributes to the ATP binding site; the sequence is GPTGVGKT. 14–19 is a binding site for substrate; that stretch reads TGVGKT. Residues 37-40 form an interaction with substrate tRNA region; that stretch reads DSAQ.

This sequence belongs to the IPP transferase family. In terms of assembly, monomer. Mg(2+) serves as cofactor.

The enzyme catalyses adenosine(37) in tRNA + dimethylallyl diphosphate = N(6)-dimethylallyladenosine(37) in tRNA + diphosphate. Its function is as follows. Catalyzes the transfer of a dimethylallyl group onto the adenine at position 37 in tRNAs that read codons beginning with uridine, leading to the formation of N6-(dimethylallyl)adenosine (i(6)A). In Fusobacterium nucleatum subsp. nucleatum (strain ATCC 25586 / DSM 15643 / BCRC 10681 / CIP 101130 / JCM 8532 / KCTC 2640 / LMG 13131 / VPI 4355), this protein is tRNA dimethylallyltransferase.